A 236-amino-acid polypeptide reads, in one-letter code: 7-cyano-7-deazaguanine synthase (236 aa).

An ATP-binding site is contributed by 7-17; the sequence is CSGGLDSVSLA. The Zn(2+) site is built by Cys-185, Cys-193, Cys-196, and Cys-199.

This sequence belongs to the QueC family. Zn(2+) serves as cofactor.

The enzyme catalyses 7-carboxy-7-deazaguanine + NH4(+) + ATP = 7-cyano-7-deazaguanine + ADP + phosphate + H2O + H(+). It participates in purine metabolism; 7-cyano-7-deazaguanine biosynthesis. In terms of biological role, catalyzes the ATP-dependent conversion of 7-carboxy-7-deazaguanine (CDG) to 7-cyano-7-deazaguanine (preQ(0)). The protein is 7-cyano-7-deazaguanine synthase of Rhizobium etli (strain ATCC 51251 / DSM 11541 / JCM 21823 / NBRC 15573 / CFN 42).